We begin with the raw amino-acid sequence, 427 residues long: 12-alpha,13-alpha-dihydroxyfumitremorgin C prenyltransferase (427 aa).

E94 contributes to the substrate binding site. Positions 105, 192, 194, 268, 353, 355, 419, and 423 each coordinate dimethylallyl diphosphate.

Belongs to the tryptophan dimethylallyltransferase family.

It catalyses the reaction 12alpha,13alpha-dihydroxyfumitremorgin C + dimethylallyl diphosphate = fumitremorgin B + diphosphate. Its pathway is mycotoxin biosynthesis. In terms of biological role, 12-alpha,13-alpha-dihydroxyfumitremorgin C prenyltransferase; part of the gene cluster that mediates the biosynthesis of fumitremorgins, indole alkaloids that carry not only intriguing chemical structures, but also interesting biological and pharmacological activities. The biosynthesis of fumitremorgin-type alkaloids begins by condensation of the two amino acids L-tryptophan and L-proline to brevianamide F, catalyzed by the non-ribosomal peptide synthetase ftmA. Brevianamide F is then prenylated by the prenyltransferase ftmPT1/ftmB in the presence of dimethylallyl diphosphate, resulting in the formation of tryprostatin B. The three cytochrome P450 monooxygenases, ftmP450-1/ftmC, ftmP450-2/ftmE and ftmP450-3/FtmG, are responsible for the conversion of tryprostatin B to 6-hydroxytryprostatin B, tryprostatin A to fumitremorgin C and fumitremorgin C to 12,13-dihydroxyfumitremorgin C, respectively. The putative methyltransferase ftmMT/ftmD is expected for the conversion of 6-hydroxytryprostatin B to tryprostatin A. FtmPT2/FtmH catalyzes the prenylation of 12,13-dihydroxyfumitre-morgin C in the presence of dimethylallyl diphosphate, resulting in the formation of fumitremorgin B. Fumitremorgin B is further converted to verruculogen by ftmOx1/ftmF via the insertion of an endoperoxide bond between the two prenyl moieties. In some fungal species, verruculogen is further converted to fumitremorgin A, but the enzymes involved in this step have not been identified yet. The chain is 12-alpha,13-alpha-dihydroxyfumitremorgin C prenyltransferase from Aspergillus fumigatus (Neosartorya fumigata).